Here is a 175-residue protein sequence, read N- to C-terminus: MNFIPISLIFSGHGFGFNTNIFETNVINLAVVIGVVVSFVGDAVRELLKNRKETIVNNLREADNRALEAQEKLSQAKAQLADAQKKATEIREQGLVAAEQEKKLCIKQAEEDAARLKQVQQDTIRFQQQKAIQQISQQIVSLALQQVRQKLKMGASAPFHVSVNKSKIDLFKRSL.

The helical transmembrane segment at 26 to 44 (VINLAVVIGVVVSFVGDAV) threads the bilayer.

Belongs to the ATPase B chain family. In terms of assembly, F-type ATPases have 2 components, F(1) - the catalytic core - and F(0) - the membrane proton channel. F(1) has five subunits: alpha(3), beta(3), gamma(1), delta(1), epsilon(1). F(0) has four main subunits: a(1), b(1), b'(1) and c(10-14). The alpha and beta chains form an alternating ring which encloses part of the gamma chain. F(1) is attached to F(0) by a central stalk formed by the gamma and epsilon chains, while a peripheral stalk is formed by the delta, b and b' chains.

Its subcellular location is the plastid. The protein localises to the chloroplast thylakoid membrane. F(1)F(0) ATP synthase produces ATP from ADP in the presence of a proton or sodium gradient. F-type ATPases consist of two structural domains, F(1) containing the extramembraneous catalytic core and F(0) containing the membrane proton channel, linked together by a central stalk and a peripheral stalk. During catalysis, ATP synthesis in the catalytic domain of F(1) is coupled via a rotary mechanism of the central stalk subunits to proton translocation. Functionally, component of the F(0) channel, it forms part of the peripheral stalk, linking F(1) to F(0). In Tupiella akineta (Green alga), this protein is ATP synthase subunit b, chloroplastic.